The sequence spans 230 residues: Oxaloacetate tautomerase FAHD1, mitochondrial (230 aa).

A mitochondrion-targeting transit peptide spans 1–26; it reads MAAAAAAAAQRLLAASTKIIGVGRNY. Mg(2+) contacts are provided by glutamate 73, glutamate 75, and aspartate 104.

This sequence belongs to the FAH family. Mg(2+) serves as cofactor. Mn(2+) is required as a cofactor.

It is found in the mitochondrion. The catalysed reaction is oxaloacetate = enol-oxaloacetate. Its function is as follows. Tautomerase that converts enol-oxaloacetate, a strong inhibitor of succinate dehydrogenase, to the physiological keto form of oxaloacetate. This chain is Oxaloacetate tautomerase FAHD1, mitochondrial, found in Oryza sativa subsp. japonica (Rice).